The chain runs to 131 residues: 1,4-dihydroxy-2-naphthoyl-CoA hydrolase (131 aa).

The active site involves aspartate 7.

It belongs to the 4-hydroxybenzoyl-CoA thioesterase family. DHNA-CoA hydrolase subfamily.

It catalyses the reaction 1,4-dihydroxy-2-naphthoyl-CoA + H2O = 1,4-dihydroxy-2-naphthoate + CoA + H(+). It participates in cofactor biosynthesis; phylloquinone biosynthesis. The protein operates within quinol/quinone metabolism; 1,4-dihydroxy-2-naphthoate biosynthesis; 1,4-dihydroxy-2-naphthoate from chorismate: step 7/7. In terms of biological role, catalyzes the hydrolysis of 1,4-dihydroxy-2-naphthoyl-CoA (DHNA-CoA) to 1,4-dihydroxy-2-naphthoate (DHNA), a reaction involved in phylloquinone (vitamin K1) biosynthesis. This chain is 1,4-dihydroxy-2-naphthoyl-CoA hydrolase, found in Synechococcus sp. (strain RCC307).